The sequence spans 168 residues: Lipoprotein signal peptidase (168 aa).

Helical transmembrane passes span 12 to 32, 67 to 87, and 93 to 113; these read WYWV…WVLA, WQRW…TIWL, and NMVR…GNLI. Active-site residues include aspartate 123 and aspartate 141. The helical transmembrane segment at 136–156 threads the bilayer; the sequence is AFNIADAAIFIGAVLIIIDSF.

The protein belongs to the peptidase A8 family.

The protein localises to the cell inner membrane. The catalysed reaction is Release of signal peptides from bacterial membrane prolipoproteins. Hydrolyzes -Xaa-Yaa-Zaa-|-(S,diacylglyceryl)Cys-, in which Xaa is hydrophobic (preferably Leu), and Yaa (Ala or Ser) and Zaa (Gly or Ala) have small, neutral side chains.. The protein operates within protein modification; lipoprotein biosynthesis (signal peptide cleavage). Its function is as follows. This protein specifically catalyzes the removal of signal peptides from prolipoproteins. The polypeptide is Lipoprotein signal peptidase (Shewanella amazonensis (strain ATCC BAA-1098 / SB2B)).